A 621-amino-acid chain; its full sequence is 1-deoxy-D-xylulose-5-phosphate synthase (621 aa).

Thiamine diphosphate contacts are provided by residues His80 and 121-123; that span reads GHS. Asp152 provides a ligand contact to Mg(2+). Thiamine diphosphate is bound by residues 153–154, Asn181, Tyr288, and Glu371; that span reads GA. Asn181 lines the Mg(2+) pocket.

The protein belongs to the transketolase family. DXPS subfamily. Homodimer. Requires Mg(2+) as cofactor. Thiamine diphosphate serves as cofactor.

It catalyses the reaction D-glyceraldehyde 3-phosphate + pyruvate + H(+) = 1-deoxy-D-xylulose 5-phosphate + CO2. Its pathway is metabolic intermediate biosynthesis; 1-deoxy-D-xylulose 5-phosphate biosynthesis; 1-deoxy-D-xylulose 5-phosphate from D-glyceraldehyde 3-phosphate and pyruvate: step 1/1. Its function is as follows. Catalyzes the acyloin condensation reaction between C atoms 2 and 3 of pyruvate and glyceraldehyde 3-phosphate to yield 1-deoxy-D-xylulose-5-phosphate (DXP). The protein is 1-deoxy-D-xylulose-5-phosphate synthase of Pectobacterium atrosepticum (strain SCRI 1043 / ATCC BAA-672) (Erwinia carotovora subsp. atroseptica).